The sequence spans 129 residues: Small ribosomal subunit protein uS11 (129 aa).

It belongs to the universal ribosomal protein uS11 family. Part of the 30S ribosomal subunit. Interacts with proteins S7 and S18. Binds to IF-3.

Its function is as follows. Located on the platform of the 30S subunit, it bridges several disparate RNA helices of the 16S rRNA. Forms part of the Shine-Dalgarno cleft in the 70S ribosome. The polypeptide is Small ribosomal subunit protein uS11 (Oleidesulfovibrio alaskensis (strain ATCC BAA-1058 / DSM 17464 / G20) (Desulfovibrio alaskensis)).